We begin with the raw amino-acid sequence, 161 residues long: Mediator of RNA polymerase II transcription subunit 10 (161 aa).

The protein belongs to the Mediator complex subunit 10 family. In terms of assembly, component of the Mediator complex.

Its subcellular location is the nucleus. In terms of biological role, component of the Mediator complex, a coactivator involved in the regulated transcription of nearly all RNA polymerase II-dependent genes. Mediator functions as a bridge to convey information from gene-specific regulatory proteins to the basal RNA polymerase II transcription machinery. Mediator is recruited to promoters by direct interactions with regulatory proteins and serves as a scaffold for the assembly of a functional preinitiation complex with RNA polymerase II and the general transcription factors. The polypeptide is Mediator of RNA polymerase II transcription subunit 10 (NUT2) (Kluyveromyces lactis (strain ATCC 8585 / CBS 2359 / DSM 70799 / NBRC 1267 / NRRL Y-1140 / WM37) (Yeast)).